Reading from the N-terminus, the 161-residue chain is Thy-1 membrane glycoprotein (161 aa).

The N-terminal stretch at 1-19 is a signal peptide; the sequence is MNLAISIALLLTVLQVSRG. At Q20 the chain carries Pyrrolidone carboxylic acid. Positions 20-126 constitute an Ig-like V-type domain; the sequence is QKVTSLTACL…SQNVTVLRDK (107 aa). 2 cysteine pairs are disulfide-bonded: C28/C130 and C38/C104. N42 and N79 each carry an N-linked (GlcNAc...) asparagine glycan. The residue at position 82 (S82) is a Phosphoserine. An N-linked (GlcNAc...) asparagine glycan is attached at N119. Residue C130 is the site of GPI-anchor amidated cysteine; alternate attachment. Positions 131 to 161 are cleaved as a propeptide — removed in mature form; sequence EGISLLAQNTSWLXLLLLSLSLLQATDFMSL. N-linked (GlcNAc...) asparagine glycosylation is present at N139.

The protein localises to the cell membrane. Its function is as follows. May play a role in cell-cell or cell-ligand interactions during synaptogenesis and other events in the brain. The protein is Thy-1 membrane glycoprotein (THY1) of Macaca mulatta (Rhesus macaque).